Consider the following 106-residue polypeptide: MATAKPKKKNPRLASGRKRVRQDVKLNAANTSLRSKYRTAVKNVEKAVLAGDKDKAKDLFAKAQSIVDTISDKGIFHKNKAARDKSRLSAKVKALALKAVETPTAA.

Residues 1–20 (MATAKPKKKNPRLASGRKRV) are compositionally biased toward basic residues. A disordered region spans residues 1–21 (MATAKPKKKNPRLASGRKRVR).

Belongs to the bacterial ribosomal protein bS20 family.

Functionally, binds directly to 16S ribosomal RNA. This chain is Small ribosomal subunit protein bS20, found in Polaromonas naphthalenivorans (strain CJ2).